A 365-amino-acid chain; its full sequence is Eukaryotic translation initiation factor 3 subunit H (365 aa).

In terms of domain architecture, MPN spans 11 to 160 (VKVEALVVMK…LRAFRLSPKF (150 aa)).

Belongs to the eIF-3 subunit H family. As to quaternary structure, component of the eukaryotic translation initiation factor 3 (eIF-3) complex.

The protein resides in the cytoplasm. Functionally, component of the eukaryotic translation initiation factor 3 (eIF-3) complex, which is involved in protein synthesis of a specialized repertoire of mRNAs and, together with other initiation factors, stimulates binding of mRNA and methionyl-tRNAi to the 40S ribosome. The eIF-3 complex specifically targets and initiates translation of a subset of mRNAs involved in cell proliferation. This chain is Eukaryotic translation initiation factor 3 subunit H, found in Aspergillus niger (strain ATCC MYA-4892 / CBS 513.88 / FGSC A1513).